Consider the following 220-residue polypeptide: MAKNKFNTAWLHDHINDPYVKMAQREGYRARAAYKLKEIDEQDRLIRPGQVIVDLGSVPGSWSQYARNKLAKGAQRDAEREGGIDGTIIALDILPMEPIADVTFIQGDFREDTVLGQLEELVGERQVDLVISDMAPNLSGVAVADAARIEHLCDLALEFSQNHLKQDGALLVKCFHGSGYSQIVEKFKHQFKVVAARKPKASRDKSSETFILGKHLKRPA.

The S-adenosyl-L-methionine site is built by glycine 60, tryptophan 62, aspartate 92, aspartate 108, and aspartate 133. Lysine 173 serves as the catalytic Proton acceptor.

Belongs to the class I-like SAM-binding methyltransferase superfamily. RNA methyltransferase RlmE family.

Its subcellular location is the cytoplasm. The enzyme catalyses uridine(2552) in 23S rRNA + S-adenosyl-L-methionine = 2'-O-methyluridine(2552) in 23S rRNA + S-adenosyl-L-homocysteine + H(+). Functionally, specifically methylates the uridine in position 2552 of 23S rRNA at the 2'-O position of the ribose in the fully assembled 50S ribosomal subunit. This is Ribosomal RNA large subunit methyltransferase E from Paraburkholderia phytofirmans (strain DSM 17436 / LMG 22146 / PsJN) (Burkholderia phytofirmans).